A 232-amino-acid chain; its full sequence is Orotidine 5'-phosphate decarboxylase (232 aa).

Substrate is bound by residues D13, K35, 62–71, T122, R182, Q191, G211, and R212; that span reads DLKFHDIPNT. K64 functions as the Proton donor in the catalytic mechanism.

The protein belongs to the OMP decarboxylase family. Type 1 subfamily. In terms of assembly, homodimer.

The enzyme catalyses orotidine 5'-phosphate + H(+) = UMP + CO2. It participates in pyrimidine metabolism; UMP biosynthesis via de novo pathway; UMP from orotate: step 2/2. Catalyzes the decarboxylation of orotidine 5'-monophosphate (OMP) to uridine 5'-monophosphate (UMP). In Pseudomonas fluorescens (strain Pf0-1), this protein is Orotidine 5'-phosphate decarboxylase.